A 503-amino-acid polypeptide reads, in one-letter code: L-amino-acid oxidase (503 aa).

Residues 1 to 18 form the signal peptide; sequence MNVFFMFSLLFLAALGSC. A disulfide bridge connects residues Cys28 and Cys191. FAD-binding positions include 61 to 62, 81 to 82, Arg89, and 105 to 108; these read MS, EA, and GPMR. Arg108 contacts substrate. Residue Asn190 is glycosylated (N-linked (GlcNAc...) asparagine). His241 serves as a coordination point for substrate. Position 279 (Val279) interacts with FAD. Cysteines 349 and 430 form a disulfide. Residue Tyr390 coordinates substrate. Residues Glu475 and 482-487 each bind FAD; that span reads GWIDST. Substrate is bound at residue 482-483; that stretch reads GW.

The protein belongs to the flavin monoamine oxidase family. FIG1 subfamily. In terms of assembly, homodimer; non-covalently linked. FAD serves as cofactor. In terms of processing, N-glycosylated. The enzymatic activity is not affected by deglycosylation. In terms of tissue distribution, expressed by the venom gland.

The protein localises to the secreted. The enzyme catalyses an L-alpha-amino acid + O2 + H2O = a 2-oxocarboxylate + H2O2 + NH4(+). The catalysed reaction is L-leucine + O2 + H2O = 4-methyl-2-oxopentanoate + H2O2 + NH4(+). It catalyses the reaction L-phenylalanine + O2 + H2O = 3-phenylpyruvate + H2O2 + NH4(+). It carries out the reaction L-methionine + O2 + H2O = 4-methylsulfanyl-2-oxobutanoate + H2O2 + NH4(+). The enzyme catalyses L-isoleucine + O2 + H2O = (S)-3-methyl-2-oxopentanoate + H2O2 + NH4(+). Catalyzes an oxidative deamination of predominantly hydrophobic and aromatic L-amino acids, thus producing hydrogen peroxide that may contribute to the diverse toxic effects of this enzyme. Is highly active on L-Met, L-Leu, L-Phe and L-Ile. Exhibits diverse biological activities, such as antibacterial on both Gram-positive and Gram-negative bacteria and antiparasitic activities, as well as induction of platelet aggregation. Effects of snake L-amino oxidases on platelets are controversial, since they either induce aggregation or inhibit agonist-induced aggregation. These different effects are probably due to different experimental conditions. This protein may also have activities in hemorrhage, hemolysis, edema, and apoptosis. This chain is L-amino-acid oxidase, found in Bothrops pauloensis (Neuwied's lancehead).